A 185-amino-acid polypeptide reads, in one-letter code: Threonylcarbamoyl-AMP synthase (185 aa).

In terms of domain architecture, YrdC-like spans 1–185 (MDNLQQVVSA…AFSDTVLRQG (185 aa)).

This sequence belongs to the SUA5 family. TsaC subfamily.

It localises to the cytoplasm. It catalyses the reaction L-threonine + hydrogencarbonate + ATP = L-threonylcarbamoyladenylate + diphosphate + H2O. Functionally, required for the formation of a threonylcarbamoyl group on adenosine at position 37 (t(6)A37) in tRNAs that read codons beginning with adenine. Catalyzes the conversion of L-threonine, HCO(3)(-)/CO(2) and ATP to give threonylcarbamoyl-AMP (TC-AMP) as the acyladenylate intermediate, with the release of diphosphate. This chain is Threonylcarbamoyl-AMP synthase, found in Photobacterium profundum (strain SS9).